We begin with the raw amino-acid sequence, 585 residues long: 4-hydroxy-3-methylbut-2-en-1-yl diphosphate synthase (flavodoxin) (585 aa).

Positions 492, 495, 526, and 533 each coordinate [4Fe-4S] cluster.

Belongs to the IspG family. Requires [4Fe-4S] cluster as cofactor.

The enzyme catalyses (2E)-4-hydroxy-3-methylbut-2-enyl diphosphate + oxidized [flavodoxin] + H2O + 2 H(+) = 2-C-methyl-D-erythritol 2,4-cyclic diphosphate + reduced [flavodoxin]. The protein operates within isoprenoid biosynthesis; isopentenyl diphosphate biosynthesis via DXP pathway; isopentenyl diphosphate from 1-deoxy-D-xylulose 5-phosphate: step 5/6. Functionally, converts 2C-methyl-D-erythritol 2,4-cyclodiphosphate (ME-2,4cPP) into 1-hydroxy-2-methyl-2-(E)-butenyl 4-diphosphate. The polypeptide is 4-hydroxy-3-methylbut-2-en-1-yl diphosphate synthase (flavodoxin) (Akkermansia muciniphila (strain ATCC BAA-835 / DSM 22959 / JCM 33894 / BCRC 81048 / CCUG 64013 / CIP 107961 / Muc)).